The following is a 347-amino-acid chain: 4-hydroxy-tetrahydrodipicolinate reductase 1, chloroplastic (347 aa).

Residues 1–51 (MATNGLMASSSVFLHRPRIAFASRTNQTVGKYGKGRVSFMGIGTRRLPVVL) constitute a chloroplast transit peptide. The residue at position 52 (Ser-52) is an N-acetylserine. Residues 79 to 84 (GCSGKM), 171 to 173 (GTT), and 194 to 197 (SPQM) contribute to the NAD(+) site. Residue His-230 is the Proton donor/acceptor of the active site. The active-site Proton donor is the Lys-234. Residue 239-240 (GT) coordinates (S)-2,3,4,5-tetrahydrodipicolinate.

Belongs to the DapB family.

Its subcellular location is the plastid. The protein localises to the chloroplast. The enzyme catalyses (S)-2,3,4,5-tetrahydrodipicolinate + NAD(+) + H2O = (2S,4S)-4-hydroxy-2,3,4,5-tetrahydrodipicolinate + NADH + H(+). The catalysed reaction is (S)-2,3,4,5-tetrahydrodipicolinate + NADP(+) + H2O = (2S,4S)-4-hydroxy-2,3,4,5-tetrahydrodipicolinate + NADPH + H(+). It functions in the pathway amino-acid biosynthesis; L-lysine biosynthesis via DAP pathway; (S)-tetrahydrodipicolinate from L-aspartate: step 4/4. In terms of biological role, catalyzes the conversion of 4-hydroxy-tetrahydrodipicolinate (HTPA) to tetrahydrodipicolinate. The sequence is that of 4-hydroxy-tetrahydrodipicolinate reductase 1, chloroplastic (DAPB1) from Arabidopsis thaliana (Mouse-ear cress).